The primary structure comprises 466 residues: Replication termination factor 1 (466 aa).

DNA-binding domain regions lie at residues arginine 94–lysine 249 and tyrosine 250–leucine 421. HTH myb-type domains lie at asparagine 251–glutamate 304 and isoleucine 305–isoleucine 363. DNA-binding regions (H-T-H motif) lie at residues tryptophan 278–isoleucine 300 and tryptophan 336–isoleucine 359.

Its subcellular location is the nucleus. Mediates site-specific replication termination at the polar replication barrier RTS1, a barrier which ensures that replication of the mat1 locus in S.pombe occurs in the centromere-proximal direction. This is Replication termination factor 1 (rtf1) from Schizosaccharomyces pombe (strain 972 / ATCC 24843) (Fission yeast).